The following is a 74-amino-acid chain: WAP four-disulfide core domain protein 18 (74 aa).

The signal sequence occupies residues 1-24; the sequence is MKTATVFVLVALIFMTMTTAWALS. One can recognise a WAP domain in the interval 26-73; the sequence is PKEKPGACPKPPPRSFGTCDERCTGDGSCSGNMKCCSNGCGHACKPPV.

It localises to the secreted. Could have proteinase inhibiting capacity. This Bos taurus (Bovine) protein is WAP four-disulfide core domain protein 18 (WFDC18).